The primary structure comprises 250 residues: Endomucin (250 aa).

The N-terminal stretch at 1–20 (MRLLQVTALFFLLSNSLCRG) is a signal peptide. Low complexity-rich tracts occupy residues 24-38 (KALT…SATT) and 45-60 (TNKS…TTNS). Disordered stretches follow at residues 24 to 83 (KALT…ETTT) and 105 to 153 (NAVS…LTTA). N-linked (GlcNAc...) asparagine glycosylation is found at asparagine 46, asparagine 115, and asparagine 119. Composition is skewed to polar residues over residues 105 to 135 (NAVS…NQLP) and 143 to 153 (TETPSASLTTA). Residues 180–200 (VILPVVIALIVITVLVFTLVG) form a helical membrane-spanning segment. Residues 210 to 250 (PGTPESGNDQPQSDKESVKLLTVKTISHESGEHSAQGKAKN) are disordered. Serine 226 is subject to Phosphoserine.

Highly O-glycosylated. Sialic acid-rich glycoprotein.

The protein resides in the membrane. Functionally, endothelial sialomucin, also called endomucin or mucin-like sialoglycoprotein, which interferes with the assembly of focal adhesion complexes and inhibits interaction between cells and the extracellular matrix. This Rattus norvegicus (Rat) protein is Endomucin (Emcn).